The primary structure comprises 185 residues: uncharacterized protein (185 aa).

5 consecutive transmembrane segments (helical) span residues 4 to 24 (IAWM…LGLA), 35 to 55 (GLLF…ATGV), 60 to 80 (GASA…SIAY), 123 to 143 (VLAY…INDS), and 152 to 172 (ILKL…SYFI).

The protein localises to the cell membrane. This is an uncharacterized protein from Bacillus subtilis (strain 168).